A 174-amino-acid polypeptide reads, in one-letter code: Protein C2-DOMAIN ABA-RELATED 2 (174 aa).

An N-acetylmethionine modification is found at Met-1. In terms of domain architecture, C2 spans 1 to 104 (MENMLGLLRL…EAIRIQNQLG (104 aa)). Positions 21, 22, 27, 73, 74, 75, and 81 each coordinate Ca(2+).

The protein belongs to the plant CAR protein family. Binds to PYR/PYL/RCAR abscisic acid intracellular receptors in an ABA-independent manner, both at the plasma membrane and in the nucleus. Ca(2+) serves as cofactor.

The protein resides in the cell membrane. It localises to the nucleus. Functionally, stimulates the GTPase/ATPase activities of Obg-like ATPases. Mediates the transient calcium-dependent interaction of PYR/PYL/RCAR abscisic acid (ABA) receptors with the plasma membrane and thus regulates ABA sensitivity. This is Protein C2-DOMAIN ABA-RELATED 2 from Arabidopsis thaliana (Mouse-ear cress).